Reading from the N-terminus, the 675-residue chain is Transmembrane protein 232 (675 aa).

A helical transmembrane segment spans residues 163-183 (LVKIGYLIFLRLFVFFLHGHL). Residues 598–634 (WQKDMEARKREEEAYKAQNQKDKEEKEKIHFQEIMKQ) are a coiled coil. Residues 605-624 (RKREEEAYKAQNQKDKEEKE) form a disordered region.

In terms of tissue distribution, high expression in the testis and weak expression levels in the spleen, liver, brain, uterus, lung, epididymis and kidney. Not detected in the heart or ovary.

The protein localises to the membrane. Its function is as follows. Plays a critical role for male fertility and sperm motility by regulating sperm cytoplasm removal and maintaining axoneme integrity. In Mus musculus (Mouse), this protein is Transmembrane protein 232 (Tmem232).